Consider the following 252-residue polypeptide: MGAEAVRVLVVDDSPVDRRVVELLLRAHCGGGGGAAAGEAAPFHVTAVDSGKKAMELLGRRRGDRDHLTPSSPAAAAAANDQAIDIVLTDYCMPEMTGYDLLKAIKALGSPNPIPVVVMSSENEPQRISRCLTAGAEDFILKPLKMNDVQRLRKCSGATRPKSAVAGDDDRCCNTAKKAAAAAAATPEQQQQQQRSSHLAGLAMVMNASSFEVSHYFQLIFKLILLAYAVLCLSQLLHRWSNGSSLLSLWCA.

Residues 7 to 157 form the Response regulatory domain; that stretch reads RVLVVDDSPV…DVQRLRKCSG (151 aa). Asp90 bears the 4-aspartylphosphate mark.

It belongs to the ARR family. Type-A subfamily. Post-translationally, two-component system major event consists of a His-to-Asp phosphorelay between a sensor histidine kinase (HK) and a response regulator (RR). In plants, the His-to-Asp phosphorelay involves an additional intermediate named Histidine-containing phosphotransfer protein (HPt). This multistep phosphorelay consists of a His-Asp-His-Asp sequential transfer of a phosphate group between first a His and an Asp of the HK protein, followed by the transfer to a conserved His of the HPt protein and finally the transfer to an Asp in the receiver domain of the RR protein. Expressed in mature leaves and flowers, and at low levels in roots and shoots.

Functions as a response regulator involved in His-to-Asp phosphorelay signal transduction system. Phosphorylation of the Asp residue in the receiver domain activates the ability of the protein to promote the transcription of target genes. Type-A response regulators seem to act as negative regulators of the cytokinin signaling. This is Two-component response regulator ORR2 from Oryza sativa subsp. indica (Rice).